We begin with the raw amino-acid sequence, 1085 residues long: Aminopeptidase N (1085 aa).

A signal peptide (required for ER targeting and membrane association; not cleaved) is located at residues 1-30 (MKLTKGCAYKYIIFTVLILANILYDNKKRC). The sufficient for targeting to the food vacuole stretch occupies residues 1 to 200 (MKLTKGCAYK…VKKNEPKIHY (200 aa)). A disordered region spans residues 108-130 (EKGDNNNNNHQNNNGNDNKKRLG). A compositionally biased stretch (low complexity) spans 112-123 (NNNNNHQNNNGN). A peptide contacts are provided by Glu-319, Gly-460, Ala-461, and Glu-463. Zn(2+) is bound at residue His-496. Glu-497 functions as the Proton acceptor in the catalytic mechanism. Zn(2+) is bound by residues His-500 and Glu-519.

Belongs to the peptidase M1 family. Heterodimer of the p68 form and the p35 form which are derived from the p120 precursor. Zn(2+) serves as cofactor. Post-translationally, the full length protein appears to be cleaved into a 120 kDa precursor. This precursor is then proteolytically cleaved at the N-terminus generating a 96 kDa form which is further processed at the C-terminus into 68 kDa and 35 kDa forms that remain associated.

It is found in the parasitophorous vacuole membrane. The protein localises to the nucleus. The protein resides in the cytoplasm. It localises to the vacuole lumen. Inhibited by 1,10-phenanthroline, EDTA and bestatin. Inhibited by (Benzyl)Tyr-Ala (BTA). Activity is not affected by phosphoramidin, PMSF, leupeptin, iodoacetamide or pepstatin. Displays aminopeptidase activity with a broad substrate specificity. Preferentially, cleaves after Leu and Met, but also cleaves after Ala and Arg. Low activity towards Lys, Phe, Tyr, Trp, Gln, Ser and Gly and negligible activity towards Glu, Asp, Pro, Ile, Thr, Val, His and Asn. Has dipeptidase activity. Plays a role in the terminal stages of host hemoglobin digestion by cleaving the N-terminal residue of small hemoglobin-derived oligopeptides. The chain is Aminopeptidase N from Plasmodium falciparum (isolate 3D7).